A 96-amino-acid polypeptide reads, in one-letter code: uncharacterized protein (96 aa).

A signal peptide spans 1–19 (MKQIIPALITLSFSPMAIA).

This is an uncharacterized protein from Synechocystis sp. (strain ATCC 27184 / PCC 6803 / Kazusa).